The chain runs to 129 residues: Large ribosomal subunit protein bL21 (129 aa).

Residues 100–129 are disordered; the sequence is DGAKPSKKAAEKKAPKAAPKKAAAKAESAE.

The protein belongs to the bacterial ribosomal protein bL21 family. In terms of assembly, part of the 50S ribosomal subunit. Contacts protein L20.

Functionally, this protein binds to 23S rRNA in the presence of protein L20. The protein is Large ribosomal subunit protein bL21 of Brucella anthropi (strain ATCC 49188 / DSM 6882 / CCUG 24695 / JCM 21032 / LMG 3331 / NBRC 15819 / NCTC 12168 / Alc 37) (Ochrobactrum anthropi).